The following is a 277-amino-acid chain: Putative thiosulfate sulfurtransferase (277 aa).

Rhodanese domains follow at residues 18–125 and 154–274; these read HAPK…PLSS and AINV…APIE. Cysteine 233 acts as the Cysteine persulfide intermediate in catalysis. Residue arginine 238 coordinates substrate.

The catalysed reaction is thiosulfate + hydrogen cyanide = thiocyanate + sulfite + 2 H(+). Its function is as follows. May be a sulfotransferase involved in the formation of thiosulfate. The chain is Putative thiosulfate sulfurtransferase (cysA1) from Mycobacterium tuberculosis (strain CDC 1551 / Oshkosh).